The chain runs to 1023 residues: Sodium/potassium-transporting ATPase subunit alpha-1 (1023 aa).

The propeptide occupies 1-5; sequence MGKGV. A compositionally biased stretch (basic and acidic residues) spans 1–11; sequence MGKGVGRDKYE. The disordered stretch occupies residues 1-39; it reads MGKGVGRDKYEPAAVSEQGDKKGKKGKKDRDMDELKKEV. The Cytoplasmic portion of the chain corresponds to 6-87; it reads GRDKYEPAAV…NALTPPPTTP (82 aa). Lys9 is modified (N6-acetyllysine). Tyr10 carries the phosphotyrosine modification. Ser16 is modified (phosphoserine). Lys21 carries the N6-acetyllysine modification. Over residues 28–39 the composition is skewed to basic and acidic residues; that stretch reads KDRDMDELKKEV. A phosphoserine mark is found at Ser40 and Ser47. The segment at 82-84 is phosphoinositide-3 kinase binding; that stretch reads PPP. Residues 88–108 traverse the membrane as a helical segment; that stretch reads EWIKFCRQLFGGFSMLLWIGA. Topologically, residues 109–131 are extracellular; that stretch reads ILCFLAYSIQAATEEEPQNDNLY. A helical membrane pass occupies residues 132–152; it reads LGVVLSAVVIITGCFSYYQEA. Residues 153–288 are Cytoplasmic-facing; that stretch reads KSSKIMESFK…GGQTPIAAEI (136 aa). Positions 216–235 are disordered; it reads SSLTGESEPQTRSPDFTNEN. At Ser228 the chain carries Phosphoserine. Position 260 is a phosphotyrosine (Tyr260). A helical membrane pass occupies residues 289 to 308; sequence EHFIHIITGVAVFLGVSFFI. The Extracellular segment spans residues 309–320; that stretch reads LSLILEYTWLEA. A helical transmembrane segment spans residues 321–338; that stretch reads VIFLIGIIVANVPEGLLA. At 339 to 772 the chain is on the cytoplasmic side; it reads TVTVCLTLTA…EEGRLIFDNL (434 aa). The 4-aspartylphosphate intermediate role is filled by Asp376. Phosphoserine occurs at positions 452 and 484. Lys487 is an ATP binding site. Tyr542 is subject to Phosphotyrosine. A mediates interaction with SCN7A region spans residues 596 to 717; the sequence is RAAVPDAVGK…QGAIVAVTGD (122 aa). The residue at position 661 (Lys661) is an N6-succinyllysine. Ser668 and Ser675 each carry phosphoserine. Residues Asp717 and Asp721 each contribute to the Mg(2+) site. The helical transmembrane segment at 773–792 threads the bilayer; sequence KKSIAYTLTSNIPEITPFLI. Over 793 to 802 the chain is Extracellular; sequence FIIANIPLPL. A helical membrane pass occupies residues 803 to 823; sequence GTVTILCIDLGTDMVPAISLA. The Cytoplasmic segment spans residues 824–843; that stretch reads YEQAESDIMKRQPRNPKTDK. A helical transmembrane segment spans residues 844 to 866; sequence LVNERLISMAYGQIGMIQALGGF. At 867 to 918 the chain is on the extracellular side; that stretch reads FTYFVILAENGFLPIHLLGLRVDWDDRWINDVEDSYGQQWTYEQRKIVEFTC. Residues 919-938 form a helical membrane-spanning segment; sequence HTAFFVSIVVVQWADLVICK. Residues 939–951 lie on the Cytoplasmic side of the membrane; the sequence is TRRNSVFQQGMKN. Ser943 carries the post-translational modification Phosphoserine; by PKA. The chain crosses the membrane as a helical span at residues 952 to 970; sequence KILIFGLFEETALAAFLSY. Over 971 to 985 the chain is Extracellular; sequence CPGMGVALRMYPLKP. The helical transmembrane segment at 986–1006 threads the bilayer; that stretch reads TWWFCAFPYSLLIFVYDEVRK. Topologically, residues 1007–1023 are cytoplasmic; the sequence is LIIRRRPGGWVEKETYY.

It belongs to the cation transport ATPase (P-type) (TC 3.A.3) family. Type IIC subfamily. The sodium/potassium-transporting ATPase is composed of a catalytic alpha subunit, an auxiliary non-catalytic beta subunit and an additional regulatory subunit. Interacts with regulatory subunit FXYD1. Interacts with regulatory subunit FXYD3. Interacts with SIK1. Binds the HLA class II histocompatibility antigen DR1. Interacts with SLC35G1 and STIM1. Interacts with CLN3; this interaction regulates the sodium/potassium-transporting ATPase complex localization at the plasma membrane. Interacts with SCN7A; activates ATP1A1 P-type sodium:potassium-exchanging transporter activity which indirectly signals to nearby neurons to regulate sodium homeostasis. Phosphorylation on Tyr-10 modulates pumping activity. Phosphorylation of Ser-943 by PKA modulates the response of ATP1A1 to PKC. Dephosphorylation by protein phosphatase 2A (PP2A) following increases in intracellular sodium, leading to increase catalytic activity.

It is found in the cell membrane. It localises to the basolateral cell membrane. Its subcellular location is the sarcolemma. The protein resides in the cell projection. The protein localises to the axon. It is found in the melanosome. The enzyme catalyses K(+)(out) + Na(+)(in) + ATP + H2O = K(+)(in) + Na(+)(out) + ADP + phosphate + H(+). In terms of biological role, this is the catalytic component of the active enzyme, which catalyzes the hydrolysis of ATP coupled with the exchange of sodium and potassium ions across the plasma membrane. This action creates the electrochemical gradient of sodium and potassium ions, providing the energy for active transport of various nutrients. Could also be part of an osmosensory signaling pathway that senses body-fluid sodium levels and controls salt intake behavior as well as voluntary water intake to regulate sodium homeostasis. In Homo sapiens (Human), this protein is Sodium/potassium-transporting ATPase subunit alpha-1 (ATP1A1).